Here is a 215-residue protein sequence, read N- to C-terminus: Sodium channel regulatory subunit beta-3 (215 aa).

The N-terminal stretch at 1–22 (MPAFNRLFPLASLVLIYWVSVC) is a signal peptide. Residues 23-156 (FPVCVEVPSE…EEAGEDFTSV (134 aa)) are Extracellular-facing. Cystine bridges form between Cys26–Cys48 and Cys45–Cys120. The region spanning 32-154 (ETEAVQGNPM…VTEEAGEDFT (123 aa)) is the Ig-like C2-type domain. N-linked (GlcNAc...) asparagine glycosylation is found at Asn95, Asn109, Asn113, and Asn121. A helical transmembrane segment spans residues 157–178 (VSEIMMYILLVFLTLWLLIEMI). The Cytoplasmic segment spans residues 179-215 (YCYRKVSKAEEAAQENASDYLAIPSENKENSAVPVEE).

It belongs to the sodium channel auxiliary subunit SCN3B (TC 8.A.17) family. As to quaternary structure, a voltage-gated sodium (Nav) channel consists of an ion-conducting pore-forming alpha subunit functional on its own that is regulated by one or more beta subunits. Forms homodimers and homotrimers. SCN3B is non-covalently associated with alpha subunits and induces the formation of alpha subunit oligomers, including trimers. Interacts with SCN5A/Nav1.5; regulatory subunit of SCN5A/Nav1.5. Interacts with SCN7A/Nav2.1; probable regulatory subunit of SCN7A/Nav2.1. Interacts with SCN10A; regulatory subunit of SCN10A/Nav1.8. Interacts with NFASC; probably involved in targeting the sodium channels to the nodes of Ranvier. Intramolecular disulfide bonds favor the voltage-gated sodium channel oligomeric complex assembly. Post-translationally, N-glycosylated. As to expression, expressed in the atrium.

It is found in the cell membrane. Its function is as follows. Regulatory subunit of multiple voltage-gated sodium (Nav) channels directly mediating the depolarization of excitable membranes. Navs, also called VGSCs (voltage-gated sodium channels) or VDSCs (voltage-dependent sodium channels), operate by switching between closed and open conformations depending on the voltage difference across the membrane. In the open conformation they allow Na(+) ions to selectively pass through the pore, along their electrochemical gradient. The influx of Na+ ions provokes membrane depolarization, initiating the propagation of electrical signals throughout cells and tissues. The accessory beta subunits participate in localization and functional modulation of the Nav channels. Modulates the activity of SCN2A/Nav1.2, causing a hyperpolarizing shift in the voltage-dependence of inactivation of the channel and increasing the fraction of channels operating in the fast gating mode. Modulates the activity of SCN5A/Nav1.5. Could also regulate the atypical sodium channel SCN7A/Nav2.1. Modulates the activity of SCN10A/Nav1.8, regulating its oligomerization and accelerating the recovery from inactivation. This is Sodium channel regulatory subunit beta-3 from Homo sapiens (Human).